We begin with the raw amino-acid sequence, 321 residues long: Lipoyl synthase (321 aa).

Positions 68, 73, 79, 94, 98, 101, and 308 each coordinate [4Fe-4S] cluster. One can recognise a Radical SAM core domain in the interval 80–297 (FNHGTATFMI…KAEALAMGFT (218 aa)).

The protein belongs to the radical SAM superfamily. Lipoyl synthase family. It depends on [4Fe-4S] cluster as a cofactor.

It localises to the cytoplasm. The enzyme catalyses [[Fe-S] cluster scaffold protein carrying a second [4Fe-4S](2+) cluster] + N(6)-octanoyl-L-lysyl-[protein] + 2 oxidized [2Fe-2S]-[ferredoxin] + 2 S-adenosyl-L-methionine + 4 H(+) = [[Fe-S] cluster scaffold protein] + N(6)-[(R)-dihydrolipoyl]-L-lysyl-[protein] + 4 Fe(3+) + 2 hydrogen sulfide + 2 5'-deoxyadenosine + 2 L-methionine + 2 reduced [2Fe-2S]-[ferredoxin]. It participates in protein modification; protein lipoylation via endogenous pathway; protein N(6)-(lipoyl)lysine from octanoyl-[acyl-carrier-protein]: step 2/2. Catalyzes the radical-mediated insertion of two sulfur atoms into the C-6 and C-8 positions of the octanoyl moiety bound to the lipoyl domains of lipoate-dependent enzymes, thereby converting the octanoylated domains into lipoylated derivatives. The chain is Lipoyl synthase from Edwardsiella ictaluri (strain 93-146).